Consider the following 337-residue polypeptide: Peroxisome biogenesis factor 10 (337 aa).

Residues 1–24 (MKNDNKLQKEALMRLSQLRFPFAD) are Peroxisomal matrix-facing. A helical membrane pass occupies residues 25–54 (APSIVQAHQKDEQIQGLLIMKVTELCKLIK). S55 is a topological domain (cytoplasmic). Residues 56 to 77 (QLFVNSYPKELSIFAKLLYLLF) traverse the membrane as a helical segment. The Peroxisomal matrix portion of the chain corresponds to 78-105 (TTGRRGRTLGEEYVDLTYTNRKGTRLAG). A helical transmembrane segment spans residues 106–138 (RLKMIVFAFAYPLCPYFITKLYKKIMKNNKESK). The Cytoplasmic portion of the chain corresponds to 139–145 (IEDTESV). A helical transmembrane segment spans residues 146–166 (AAFCKGLLDFILDVHMTLFYF). Residues 167–202 (KGAFYSISKRIFGMRYVFKHILSKNEANFREEGSQK) lie on the Peroxisomal matrix side of the membrane. Residues 203 to 222 (YKVLGYILLAQNVMKWYPVL) traverse the membrane as a helical segment. Residues 223-337 (TSTLGSWIYG…QPQEILVLRQ (115 aa)) are Cytoplasmic-facing. Residues C286, C289, C301, H303, C306, C309, C320, and C323 each coordinate Zn(2+). An RING-type zinc finger spans residues 286–327 (CILCLMNMSDPSCAPCGHLFCWSCLMSWCKERPECPLCRQHC).

The protein belongs to the pex2/pex10/pex12 family. In terms of assembly, component of the PEX2-PEX10-PEX12 retrotranslocation channel, composed of PEX2, PEX10 and PEX12.

It localises to the peroxisome membrane. It carries out the reaction S-ubiquitinyl-[E2 ubiquitin-conjugating enzyme]-L-cysteine + [acceptor protein]-L-lysine = [E2 ubiquitin-conjugating enzyme]-L-cysteine + N(6)-ubiquitinyl-[acceptor protein]-L-lysine.. It functions in the pathway protein modification; protein ubiquitination. Its activity is regulated as follows. The E3 ubiquitin-protein ligase activity is stimulated by PEX12. Functionally, E3 ubiquitin-protein ligase component of a retrotranslocation channel required for peroxisome organization by mediating export of the PEX5 receptor from peroxisomes to the cytosol, thereby promoting PEX5 recycling. The retrotranslocation channel is composed of PEX2, PEX10 and PEX12; each subunit contributing transmembrane segments that coassemble into an open channel that specifically allows the passage of PEX5 through the peroxisomal membrane. PEX10 also regulates PEX5 recycling by acting as a E3 ubiquitin-protein ligase. When PEX5 recycling is compromised, PEX10 catalyzes polyubiquitination of PEX5 during its passage through the retrotranslocation channel, leading to its degradation. The chain is Peroxisome biogenesis factor 10 from Saccharomyces cerevisiae (strain ATCC 204508 / S288c) (Baker's yeast).